The chain runs to 187 residues: HTH-type transcriptional regulator NfxB (187 aa).

The segment at residues L26–G45 is a DNA-binding region (H-T-H motif).

Confers resistance to guinolones. May negatively regulate the expression of genes that are associated with cell permeability to drugs. The sequence is that of HTH-type transcriptional regulator NfxB (nfxB) from Pseudomonas aeruginosa (strain ATCC 15692 / DSM 22644 / CIP 104116 / JCM 14847 / LMG 12228 / 1C / PRS 101 / PAO1).